A 138-amino-acid polypeptide reads, in one-letter code: Putative pre-16S rRNA nuclease (138 aa).

The protein belongs to the YqgF nuclease family.

The protein resides in the cytoplasm. Functionally, could be a nuclease involved in processing of the 5'-end of pre-16S rRNA. This is Putative pre-16S rRNA nuclease from Enterobacter sp. (strain 638).